Here is a 142-residue protein sequence, read N- to C-terminus: Transcriptional regulator MraZ (142 aa).

SpoVT-AbrB domains lie at 5–51 and 77–120; these read ASSL…PRNE and AMDV…DAAT.

The protein belongs to the MraZ family. Forms oligomers.

Its subcellular location is the cytoplasm. The protein resides in the nucleoid. This is Transcriptional regulator MraZ from Polaromonas sp. (strain JS666 / ATCC BAA-500).